The chain runs to 374 residues: UDP-N-acetylglucosamine--N-acetylmuramyl-(pentapeptide) pyrophosphoryl-undecaprenol N-acetylglucosamine transferase (374 aa).

UDP-N-acetyl-alpha-D-glucosamine-binding positions include 13-15, N124, R165, S193, and Q294; that span reads TGG.

Belongs to the glycosyltransferase 28 family. MurG subfamily.

It is found in the cell inner membrane. The catalysed reaction is di-trans,octa-cis-undecaprenyl diphospho-N-acetyl-alpha-D-muramoyl-L-alanyl-D-glutamyl-meso-2,6-diaminopimeloyl-D-alanyl-D-alanine + UDP-N-acetyl-alpha-D-glucosamine = di-trans,octa-cis-undecaprenyl diphospho-[N-acetyl-alpha-D-glucosaminyl-(1-&gt;4)]-N-acetyl-alpha-D-muramoyl-L-alanyl-D-glutamyl-meso-2,6-diaminopimeloyl-D-alanyl-D-alanine + UDP + H(+). It functions in the pathway cell wall biogenesis; peptidoglycan biosynthesis. Functionally, cell wall formation. Catalyzes the transfer of a GlcNAc subunit on undecaprenyl-pyrophosphoryl-MurNAc-pentapeptide (lipid intermediate I) to form undecaprenyl-pyrophosphoryl-MurNAc-(pentapeptide)GlcNAc (lipid intermediate II). The polypeptide is UDP-N-acetylglucosamine--N-acetylmuramyl-(pentapeptide) pyrophosphoryl-undecaprenol N-acetylglucosamine transferase (Rhizobium etli (strain ATCC 51251 / DSM 11541 / JCM 21823 / NBRC 15573 / CFN 42)).